The primary structure comprises 315 residues: Replication factor C small subunit (315 aa).

43–50 is an ATP binding site; it reads GSPGVGKT.

It belongs to the activator 1 small subunits family. RfcS subfamily. Heteromultimer composed of small subunits (RfcS) and large subunits (RfcL).

In terms of biological role, part of the RFC clamp loader complex which loads the PCNA sliding clamp onto DNA. The polypeptide is Replication factor C small subunit (Methanococcus maripaludis (strain C6 / ATCC BAA-1332)).